We begin with the raw amino-acid sequence, 507 residues long: ATP synthase subunit alpha, chloroplastic (507 aa).

Gly-170–Thr-177 serves as a coordination point for ATP.

This sequence belongs to the ATPase alpha/beta chains family. As to quaternary structure, F-type ATPases have 2 components, CF(1) - the catalytic core - and CF(0) - the membrane proton channel. CF(1) has five subunits: alpha(3), beta(3), gamma(1), delta(1), epsilon(1). CF(0) has four main subunits: a, b, b' and c.

It is found in the plastid. The protein localises to the chloroplast thylakoid membrane. The enzyme catalyses ATP + H2O + 4 H(+)(in) = ADP + phosphate + 5 H(+)(out). Functionally, produces ATP from ADP in the presence of a proton gradient across the membrane. The alpha chain is a regulatory subunit. The polypeptide is ATP synthase subunit alpha, chloroplastic (Physcomitrium patens (Spreading-leaved earth moss)).